The sequence spans 1132 residues: Tyrosine-protein kinase JAK2 (1132 aa).

Residues methionine 1 to glutamine 239 are interaction with cytokine/interferon/growth hormone receptors. Residues proline 37–histidine 380 enclose the FERM domain. Tyrosine 119 bears the Phosphotyrosine; by autocatalysis mark. 2 positions are modified to phosphotyrosine: tyrosine 372 and tyrosine 373. The 82-residue stretch at histidine 401 to glutamine 482 folds into the SH2; atypical domain. Serine 523 bears the Phosphoserine mark. The Protein kinase 1 domain occupies leucine 545–phenylalanine 809. Phosphotyrosine occurs at positions 570 and 813. The Protein kinase 2 domain maps to leucine 849 to aspartate 1124. Position 855 to 863 (leucine 855 to valine 863) interacts with ATP. At tyrosine 868 the chain carries Phosphotyrosine; by autocatalysis. Lysine 882 contributes to the ATP binding site. Phosphotyrosine; by autocatalysis occurs at positions 966 and 972. Catalysis depends on aspartate 976, which acts as the Proton acceptor. A phosphotyrosine; by autocatalysis mark is found at tyrosine 1007 and tyrosine 1008.

The protein belongs to the protein kinase superfamily. Tyr protein kinase family. JAK subfamily. In terms of assembly, interacts with IL23R, SKB1 and STAM2. Interacts with EPOR. Interacts with LYN. Interacts with SIRPA. Interacts with SH2B1. Interacts with TEC. Interacts with IFNGR2 (via intracellular domain). Interacts with LEPR (Isoform B). Interacts with HSP90AB1; promotes functional activation in a heat shock-dependent manner. Interacts with STRA6. Interacts with ASB2; the interaction targets JAK2 for Notch-induced proteasomal degradation. Interacts with MPL/TPOR. Requires Mg(2+) as cofactor. In terms of processing, autophosphorylated, leading to regulate its activity. Leptin promotes phosphorylation on tyrosine residues, including phosphorylation on Tyr-813. Autophosphorylation on Tyr-119 in response to EPO down-regulates its kinase activity. Autophosphorylation on Tyr-868, Tyr-966 and Tyr-972 in response to growth hormone (GH) are required for maximal kinase activity. Also phosphorylated by TEC. Phosphorylated on tyrosine residues in response to interferon gamma signaling. Phosphorylated on tyrosine residues in response to a signaling cascade that is activated by increased cellular retinol. Undergoes Notch-induced ubiquitination and subsequent proteasomal degradation which is mediated by ASB1 or ASB2, the substrate-recognition components of probable ECS E3 ubiquitin-protein ligase complexes. Ubiquitously expressed throughout most tissues.

It localises to the endomembrane system. It is found in the cytoplasm. The protein localises to the nucleus. The enzyme catalyses L-tyrosyl-[protein] + ATP = O-phospho-L-tyrosyl-[protein] + ADP + H(+). Its activity is regulated as follows. Regulated by autophosphorylation, can both activate or decrease activity. Heme regulates its activity by enhancing the phosphorylation on Tyr-1007 and Tyr-1008. Non-receptor tyrosine kinase involved in various processes such as cell growth, development, differentiation or histone modifications. Mediates essential signaling events in both innate and adaptive immunity. In the cytoplasm, plays a pivotal role in signal transduction via its association with type I receptors such as growth hormone (GHR), prolactin (PRLR), leptin (LEPR), erythropoietin (EPOR), thrombopoietin receptor (MPL/TPOR); or type II receptors including IFN-alpha, IFN-beta, IFN-gamma and multiple interleukins. Following ligand-binding to cell surface receptors, phosphorylates specific tyrosine residues on the cytoplasmic tails of the receptor, creating docking sites for STATs proteins. Subsequently, phosphorylates the STATs proteins once they are recruited to the receptor. Phosphorylated STATs then form homodimer or heterodimers and translocate to the nucleus to activate gene transcription. For example, cell stimulation with erythropoietin (EPO) during erythropoiesis leads to JAK2 autophosphorylation, activation, and its association with erythropoietin receptor (EPOR) that becomes phosphorylated in its cytoplasmic domain. Then, STAT5 (STAT5A or STAT5B) is recruited, phosphorylated and activated by JAK2. Once activated, dimerized STAT5 translocates into the nucleus and promotes the transcription of several essential genes involved in the modulation of erythropoiesis. Part of a signaling cascade that is activated by increased cellular retinol and that leads to the activation of STAT5 (STAT5A or STAT5B). In addition, JAK2 mediates angiotensin-2-induced ARHGEF1 phosphorylation. Plays a role in cell cycle by phosphorylating CDKN1B. Cooperates with TEC through reciprocal phosphorylation to mediate cytokine-driven activation of FOS transcription. In the nucleus, plays a key role in chromatin by specifically mediating phosphorylation of 'Tyr-41' of histone H3 (H3Y41ph), a specific tag that promotes exclusion of CBX5 (HP1 alpha) from chromatin. Up-regulates the potassium voltage-gated channel activity of KCNA3. This Mus musculus (Mouse) protein is Tyrosine-protein kinase JAK2.